Here is a 276-residue protein sequence, read N- to C-terminus: Cholesterol 25-hydroxylase-like protein 1, member 2 (276 aa).

N-linked (GlcNAc...) asparagine glycosylation is present at asparagine 30. Helical transmembrane passes span leucine 39 to cysteine 59, glycine 90 to tryptophan 110, and leucine 126 to phenylalanine 146. In terms of domain architecture, Fatty acid hydroxylase spans leucine 134–threonine 265. A Histidine box-1 motif is present at residues tryptophan 144–histidine 148. The short motif at histidine 159–histidine 163 is the Histidine box-2 element. N-linked (GlcNAc...) asparagine glycosylation occurs at asparagine 164. 2 helical membrane passes run cysteine 175–leucine 195 and leucine 199–glycine 219. A Histidine box-3 motif is present at residues lysine 240–glutamine 246.

It belongs to the sterol desaturase family. Requires Fe cation as cofactor.

The protein resides in the endoplasmic reticulum membrane. Its function is as follows. May catalyze the formation of 25-hydroxycholesterol from cholesterol. The polypeptide is Cholesterol 25-hydroxylase-like protein 1, member 2 (Danio rerio (Zebrafish)).